The following is a 327-amino-acid chain: uncharacterized protein (327 aa).

Residues 1-17 (MASMAAAIAASRSAVMS) show a composition bias toward low complexity. A disordered region spans residues 1 to 22 (MASMAAAIAASRSAVMSGNRPL). At A2 the chain carries N-acetylalanine. The residue at position 37 (S37) is a Phosphoserine. The disordered stretch occupies residues 76–113 (GPRAPAPRDPGDSEELTRFPGLRGPTGQKVVRFGDEDL). Phosphoserine is present on S129. The segment covering 134–148 (SISALSIQEPSNGTA) has biased composition (polar residues). The segment at 134–299 (SISALSIQEP…PDVRQDDGED (166 aa)) is disordered. Low complexity predominate over residues 162 to 176 (SQALKSSQGSRSSSL). The residue at position 175 (S175) is a Phosphoserine. 2 stretches are compositionally biased toward basic and acidic residues: residues 182 to 202 (TRKE…RGEG) and 233 to 252 (PAPK…RQEQ). S289 is subject to Phosphoserine.

The protein localises to the cytoplasm. This is an uncharacterized protein from Homo sapiens (Human).